The chain runs to 323 residues: Ribose-phosphate pyrophosphokinase (323 aa).

Residues 38-40 (DGE) and 96-97 (RQ) each bind ATP. Residues His130 and Asp170 each contribute to the Mg(2+) site. Lys193 is an active-site residue. D-ribose 5-phosphate contacts are provided by residues Arg195, Asp219, and 223–227 (DTAGT).

This sequence belongs to the ribose-phosphate pyrophosphokinase family. Class I subfamily. Homohexamer. Mg(2+) is required as a cofactor.

It localises to the cytoplasm. It catalyses the reaction D-ribose 5-phosphate + ATP = 5-phospho-alpha-D-ribose 1-diphosphate + AMP + H(+). The protein operates within metabolic intermediate biosynthesis; 5-phospho-alpha-D-ribose 1-diphosphate biosynthesis; 5-phospho-alpha-D-ribose 1-diphosphate from D-ribose 5-phosphate (route I): step 1/1. Its function is as follows. Involved in the biosynthesis of the central metabolite phospho-alpha-D-ribosyl-1-pyrophosphate (PRPP) via the transfer of pyrophosphoryl group from ATP to 1-hydroxyl of ribose-5-phosphate (Rib-5-P). In Chlorobaculum tepidum (strain ATCC 49652 / DSM 12025 / NBRC 103806 / TLS) (Chlorobium tepidum), this protein is Ribose-phosphate pyrophosphokinase.